We begin with the raw amino-acid sequence, 75 residues long: MLSAGVDSKDLSKRGESLIRQSSNRYLTTVRIAFRAKQRRFDDFDGLLEESSVKPVQRAIVELSDEQDQPDLLPG.

This sequence belongs to the RNA polymerase subunit omega family. As to quaternary structure, in cyanobacteria the RNAP catalytic core is composed of 2 alpha, 1 beta, 1 beta', 1 gamma and 1 omega subunit. When a sigma factor is associated with the core the holoenzyme is formed, which can initiate transcription.

It carries out the reaction RNA(n) + a ribonucleoside 5'-triphosphate = RNA(n+1) + diphosphate. Functionally, promotes RNA polymerase assembly. Latches the N- and C-terminal regions of the beta' subunit thereby facilitating its interaction with the beta and alpha subunits. The sequence is that of DNA-directed RNA polymerase subunit omega from Synechococcus sp. (strain CC9605).